The following is a 111-amino-acid chain: Nucleoid-associated protein PFL_1905 (111 aa).

Disordered regions lie at residues 1–20 (MKGG…EKMA) and 88–111 (SNSQ…KLPF).

The protein belongs to the YbaB/EbfC family. Homodimer.

The protein resides in the cytoplasm. Its subcellular location is the nucleoid. In terms of biological role, binds to DNA and alters its conformation. May be involved in regulation of gene expression, nucleoid organization and DNA protection. This chain is Nucleoid-associated protein PFL_1905, found in Pseudomonas fluorescens (strain ATCC BAA-477 / NRRL B-23932 / Pf-5).